The sequence spans 344 residues: Holliday junction branch migration complex subunit RuvB (344 aa).

The interval 1–182 (MRIEALNTAP…FGINSRLDYY (182 aa)) is large ATPase domain (RuvB-L). Residues Ile-21, Arg-22, Gly-63, Lys-66, Thr-67, Thr-68, 129–131 (EDY), Arg-172, Tyr-182, and Arg-219 each bind ATP. A Mg(2+)-binding site is contributed by Thr-67. A small ATPAse domain (RuvB-S) region spans residues 183 to 253 (NPELLQSIII…VARRTLESLE (71 aa)). Positions 256–344 (EGGLDDMDKK…GSLFDTAEDG (89 aa)) are head domain (RuvB-H). The DNA site is built by Arg-311 and Arg-316.

Belongs to the RuvB family. As to quaternary structure, homohexamer. Forms an RuvA(8)-RuvB(12)-Holliday junction (HJ) complex. HJ DNA is sandwiched between 2 RuvA tetramers; dsDNA enters through RuvA and exits via RuvB. An RuvB hexamer assembles on each DNA strand where it exits the tetramer. Each RuvB hexamer is contacted by two RuvA subunits (via domain III) on 2 adjacent RuvB subunits; this complex drives branch migration. In the full resolvosome a probable DNA-RuvA(4)-RuvB(12)-RuvC(2) complex forms which resolves the HJ.

It localises to the cytoplasm. The catalysed reaction is ATP + H2O = ADP + phosphate + H(+). In terms of biological role, the RuvA-RuvB-RuvC complex processes Holliday junction (HJ) DNA during genetic recombination and DNA repair, while the RuvA-RuvB complex plays an important role in the rescue of blocked DNA replication forks via replication fork reversal (RFR). RuvA specifically binds to HJ cruciform DNA, conferring on it an open structure. The RuvB hexamer acts as an ATP-dependent pump, pulling dsDNA into and through the RuvAB complex. RuvB forms 2 homohexamers on either side of HJ DNA bound by 1 or 2 RuvA tetramers; 4 subunits per hexamer contact DNA at a time. Coordinated motions by a converter formed by DNA-disengaged RuvB subunits stimulates ATP hydrolysis and nucleotide exchange. Immobilization of the converter enables RuvB to convert the ATP-contained energy into a lever motion, pulling 2 nucleotides of DNA out of the RuvA tetramer per ATP hydrolyzed, thus driving DNA branch migration. The RuvB motors rotate together with the DNA substrate, which together with the progressing nucleotide cycle form the mechanistic basis for DNA recombination by continuous HJ branch migration. Branch migration allows RuvC to scan DNA until it finds its consensus sequence, where it cleaves and resolves cruciform DNA. The sequence is that of Holliday junction branch migration complex subunit RuvB from Chlorobaculum tepidum (strain ATCC 49652 / DSM 12025 / NBRC 103806 / TLS) (Chlorobium tepidum).